Reading from the N-terminus, the 151-residue chain is Testis-expressed protein 29 (151 aa).

Topologically, residues 1–56 (MEYVLEVKNSPRHLLKQFTVCDVPLYDICDYNVSRDRCQELGCCFYEGVCYKKAVP) are extracellular. A helical transmembrane segment spans residues 57–77 (IYIHVFSALIVIIAGAFVITI). Residues 78–151 (IYRVIQESRK…TITEAEETED (74 aa)) lie on the Cytoplasmic side of the membrane. The segment at 100 to 151 (KSSEKAELASSSSKLGLKPASPGPPSAGPSMKSDEDKDDVTGTITEAEETED) is disordered. Over residues 107 to 119 (LASSSSKLGLKPA) the composition is skewed to low complexity.

It is found in the membrane. The sequence is that of Testis-expressed protein 29 (TEX29) from Homo sapiens (Human).